Consider the following 101-residue polypeptide: uncharacterized protein (101 aa).

The first 19 residues, 1 to 19, serve as a signal peptide directing secretion; it reads MKFKYLSTPLLFSALLFSA. Cysteine 20 carries N-palmitoyl cysteine lipidation. The S-diacylglycerol cysteine moiety is linked to residue cysteine 20.

It belongs to the MG439/MG440 family.

It localises to the cell membrane. This is an uncharacterized protein from Mycoplasma pneumoniae (strain ATCC 29342 / M129 / Subtype 1) (Mycoplasmoides pneumoniae).